The following is a 261-amino-acid chain: UPF0246 protein PMI0005 (261 aa).

It belongs to the UPF0246 family.

This is UPF0246 protein PMI0005 from Proteus mirabilis (strain HI4320).